Consider the following 470-residue polypeptide: Poly(A) polymerase catalytic subunit (470 aa).

Residues Asp-192 and Asp-194 contribute to the active site.

The protein belongs to the poxviridae poly(A) polymerase catalytic subunit family. In terms of assembly, heterodimer of a large (catalytic) subunit and a small (regulatory) subunit.

The catalysed reaction is RNA(n) + ATP = RNA(n)-3'-adenine ribonucleotide + diphosphate. Functionally, polymerase that creates the 3'-poly(A) tail of mRNA's. The sequence is that of Poly(A) polymerase catalytic subunit (PAPL) from Deerpox virus (strain Mule deer/United States/W-848-83/1983) (DPV).